The primary structure comprises 147 residues: Small ribosomal subunit protein uS5 (147 aa).

The S5 DRBM domain maps to 9–72 (FQEVVVNIGR…DDAFKNLIHV (64 aa)).

It belongs to the universal ribosomal protein uS5 family. Part of the 30S ribosomal subunit. Contacts proteins S4 and S8.

With S4 and S12 plays an important role in translational accuracy. Its function is as follows. Located at the back of the 30S subunit body where it stabilizes the conformation of the head with respect to the body. This chain is Small ribosomal subunit protein uS5, found in Helicobacter pylori (strain J99 / ATCC 700824) (Campylobacter pylori J99).